The chain runs to 1063 residues: Exportin-1 (1063 aa).

The Importin N-terminal domain occupies 43–109 (AQSILTTLKE…KKYVVSLIIK (67 aa)). Positions 1034 to 1063 (AEEQSNKHQMQRNIPGMLNPHELPEDMQDE) are disordered.

The protein belongs to the exportin family. As to quaternary structure, interacts with Clbn (via its N-terminus). Associates with the nuclear pore complex via interaction with mbo and Nup214. Interacts with target proteins containing NES sequences such as actin and dl. High expression observed in the developing embryonic brain, hind gut and posterior spiracles shortly before dorsal closure; and in the ventral nerve cord, midgut and somatic musculature shortly after dorsal closure. Expression increases when the tissue is well developed.

It is found in the nucleus. It localises to the nucleus membrane. Its function is as follows. Receptor for the leucine-rich nuclear export signal (NES). Binds cooperatively to the NES on its target protein and to the small GTPase Ran in its active GTP-bound form. Involved in the export of dl, RpS2 and the pre-40S ribosome from the nucleus to the cytoplasm. Plays an important role in nuclear pore assembly by mediating nucleoporin condensation and biogenesis of annulate lamellae. Required for the function or maintenance of certain tissues such as brain and gut. The polypeptide is Exportin-1 (Drosophila melanogaster (Fruit fly)).